Here is a 603-residue protein sequence, read N- to C-terminus: uncharacterized protein (603 aa).

Residues 1–93 (MSFVIAAPET…AGAYASAEAA (93 aa)) enclose the PE domain.

The protein belongs to the mycobacterial PE family. PGRS subfamily.

This is an uncharacterized protein from Mycobacterium tuberculosis (strain ATCC 25618 / H37Rv).